We begin with the raw amino-acid sequence, 304 residues long: Probable cobalamin biosynthesis protein CobD (304 aa).

5 helical membrane passes run 2–22 (IVVL…KEYI), 50–70 (ILFS…AVYL), 73–93 (FILV…FSIT), 147–167 (VDGY…GAFI), and 284–304 (AAYS…AVFL).

The protein belongs to the CobD/CbiB family.

The protein resides in the cell membrane. It participates in cofactor biosynthesis; adenosylcobalamin biosynthesis. Functionally, converts cobyric acid to cobinamide by the addition of aminopropanol on the F carboxylic group. The protein is Probable cobalamin biosynthesis protein CobD of Thermoplasma volcanium (strain ATCC 51530 / DSM 4299 / JCM 9571 / NBRC 15438 / GSS1).